Here is a 317-residue protein sequence, read N- to C-terminus: Ribonuclease H2 subunit A (317 aa).

One can recognise an RNase H type-2 domain in the interval 43–270; sequence PCCLGVDEAG…AKDMLETKGG (228 aa). 3 residues coordinate a divalent metal cation: aspartate 49, glutamate 50, and aspartate 166.

Belongs to the RNase HII family. Eukaryotic subfamily. Mn(2+) is required as a cofactor. The cofactor is Mg(2+).

The enzyme catalyses Endonucleolytic cleavage to 5'-phosphomonoester.. Endonuclease that specifically degrades the RNA of RNA-DNA hybrids. Participates in DNA replication. The protein is Ribonuclease H2 subunit A (rnh-201) of Neurospora crassa (strain ATCC 24698 / 74-OR23-1A / CBS 708.71 / DSM 1257 / FGSC 987).